Reading from the N-terminus, the 714-residue chain is RB-associated KRAB zinc finger protein (714 aa).

Positions 8–79 constitute a KRAB domain; the sequence is VSFKDVAVDF…GGEFPCQHSP (72 aa). Glycyl lysine isopeptide (Lys-Gly) (interchain with G-Cter in SUMO2) cross-links involve residues Lys97 and Lys259. The interval 171–260 is required for interaction with RB1; that stretch reads TYHGEKMCEF…YQRSQMEMKP (90 aa). 2 C2H2-type zinc fingers span residues 261–283 and 289–311; these read FECS…QRAH and YECN…RRSH. Lys315 participates in a covalent cross-link: Glycyl lysine isopeptide (Lys-Gly) (interchain with G-Cter in SUMO2). 7 consecutive C2H2-type zinc fingers follow at residues 317 to 339, 345 to 367, 373 to 395, 401 to 423, 429 to 451, 457 to 479, and 485 to 505; these read YKCN…LRTH, YECS…QRNH, YPCN…QRTH, YKCN…QRTH, YQCS…YRSH, YECN…RKVH, and HECS…HTAH. Residue Lys357 forms a Glycyl lysine isopeptide (Lys-Gly) (interchain with G-Cter in SUMO2) linkage. An interaction with AR region spans residues 417 to 714; sequence ITHQRTHTGE…NMNVLDVENL (298 aa). The C2H2-type 10; degenerate zinc-finger motif lies at 511–533; it reads YECNECGKTFLVNSAFDGHQPLP. Glycyl lysine isopeptide (Lys-Gly) (interchain with G-Cter in SUMO2) cross-links involve residues Lys534 and Lys537. 6 consecutive C2H2-type zinc fingers follow at residues 539–561, 567–589, 595–617, 623–645, 651–673, and 679–701; these read YECN…YRSH, YGCS…QRVH, YECY…HRIH, YECS…YRSH, YECN…YRTH, and YECN…QRIH.

This sequence belongs to the krueppel C2H2-type zinc-finger protein family. As to quaternary structure, interacts with AR and RB1. May also interact with other nuclear hormone receptors such as NR3C1/GR. In terms of tissue distribution, expressed in bone, brain, heart, kidney, liver, lung, pancreas and placenta.

Its subcellular location is the nucleus. May repress E2F-dependent transcription. May promote AR-dependent transcription. This is RB-associated KRAB zinc finger protein (RBAK) from Homo sapiens (Human).